The sequence spans 252 residues: tRNA (guanine-N(1)-)-methyltransferase (252 aa).

S-adenosyl-L-methionine contacts are provided by residues glycine 118 and isoleucine 138–leucine 143.

Belongs to the RNA methyltransferase TrmD family. In terms of assembly, homodimer.

It is found in the cytoplasm. The catalysed reaction is guanosine(37) in tRNA + S-adenosyl-L-methionine = N(1)-methylguanosine(37) in tRNA + S-adenosyl-L-homocysteine + H(+). Functionally, specifically methylates guanosine-37 in various tRNAs. The sequence is that of tRNA (guanine-N(1)-)-methyltransferase from Pseudomonas paraeruginosa (strain DSM 24068 / PA7) (Pseudomonas aeruginosa (strain PA7)).